The following is a 525-amino-acid chain: Peptide chain release factor 3 (525 aa).

Residues asparagine 11–alanine 279 enclose the tr-type G domain. Residues serine 20 to threonine 27, aspartate 88 to histidine 92, and asparagine 142 to aspartate 145 contribute to the GTP site.

This sequence belongs to the TRAFAC class translation factor GTPase superfamily. Classic translation factor GTPase family. PrfC subfamily.

It is found in the cytoplasm. Functionally, increases the formation of ribosomal termination complexes and stimulates activities of RF-1 and RF-2. It binds guanine nucleotides and has strong preference for UGA stop codons. It may interact directly with the ribosome. The stimulation of RF-1 and RF-2 is significantly reduced by GTP and GDP, but not by GMP. In Ligilactobacillus salivarius (strain UCC118) (Lactobacillus salivarius), this protein is Peptide chain release factor 3.